The chain runs to 883 residues: Bifunctional heparan sulfate N-deacetylase/N-sulfotransferase 2 (883 aa).

Over 1 to 18 the chain is Cytoplasmic; that stretch reads MLQLWKVVRPARQLELHR. The chain crosses the membrane as a helical; Signal-anchor for type II membrane protein span at residues 19–39; that stretch reads LILLLIAFSLGSMGFLAYYVS. At 40 to 883 the chain is on the lumenal side; that stretch reads TSPKAKEPLP…REELQHSSLG (844 aa). The segment at 41 to 597 is heparan sulfate N-deacetylase 2; sequence SPKAKEPLPL…KRHKDIWSKE (557 aa). The disordered stretch occupies residues 49-81; the sequence is PLPLGDCSSGGAAGPGPARPPVPPRPPRPPETA. Positions 65 to 78 are enriched in pro residues; it reads PARPPVPPRPPRPP. N-linked (GlcNAc...) asparagine glycans are attached at residues Asn233, Asn350, and Asn400. Residues 598–883 form a heparan sulfate N-sulfotransferase 2 region; it reads KTCDRLPKFL…REELQHSSLG (286 aa). Lys613 acts as the For sulfotransferase activity in catalysis. 3'-phosphoadenylyl sulfate is bound at residue 613 to 617; that stretch reads KTGTT. An N-linked (GlcNAc...) asparagine glycan is attached at Asn666. Residue Ser711 coordinates 3'-phosphoadenylyl sulfate. Asn726 and Asn802 each carry an N-linked (GlcNAc...) asparagine glycan. A disulfide bridge connects residues Cys817 and Cys827. 832-836 is a binding site for 3'-phosphoadenylyl sulfate; it reads KGRRY.

Belongs to the sulfotransferase 1 family. NDST subfamily. As to quaternary structure, monomer.

It is found in the golgi apparatus membrane. The enzyme catalyses alpha-D-glucosaminyl-[heparan sulfate](n) + 3'-phosphoadenylyl sulfate = N-sulfo-alpha-D-glucosaminyl-[heparan sulfate](n) + adenosine 3',5'-bisphosphate + 2 H(+). Its pathway is glycan metabolism; heparan sulfate biosynthesis. It participates in glycan metabolism; heparin biosynthesis. Its function is as follows. Essential bifunctional enzyme that catalyzes both the N-deacetylation and the N-sulfation of glucosamine (GlcNAc) of the glycosaminoglycan in heparan sulfate. Modifies the GlcNAc-GlcA disaccharide repeating sugar backbone to make N-sulfated heparosan, a prerequisite substrate for later modifications in heparin biosynthesis. Plays a role in determining the extent and pattern of sulfation of heparan sulfate. Required for the exosomal release of SDCBP, CD63 and syndecan. The sequence is that of Bifunctional heparan sulfate N-deacetylase/N-sulfotransferase 2 (NDST2) from Homo sapiens (Human).